The following is a 113-amino-acid chain: 4-cresol dehydrogenase [hydroxylating] cytochrome c subunit (113 aa).

An N-terminal signal peptide occupies residues 1–33; that stretch reads MTFPFSGAAVKRMLVTGVVLPFGLLVAAGQAQA. Residues Cys-48, Cys-51, His-52, and Met-83 each coordinate heme c.

In terms of assembly, tetramer of two cytochrome subunits and two flavoprotein subunits. In terms of processing, binds 1 heme c group covalently per subunit.

It participates in aromatic compound metabolism; p-cresol degradation. Functionally, this is the heme-containing component of the p-cresol methylhydroxylase. It accepts electrons from the flavoprotein subunit. The chain is 4-cresol dehydrogenase [hydroxylating] cytochrome c subunit (pchC) from Pseudomonas putida (Arthrobacter siderocapsulatus).